Here is a 244-residue protein sequence, read N- to C-terminus: tRNA (guanine-N(7)-)-methyltransferase (244 aa).

S-adenosyl-L-methionine is bound by residues Glu-74, Glu-99, Asp-126, and Asp-149. The active site involves Asp-149. Substrate is bound by residues Lys-153, Asp-185, and Thr-222–Glu-225.

Belongs to the class I-like SAM-binding methyltransferase superfamily. TrmB family.

The enzyme catalyses guanosine(46) in tRNA + S-adenosyl-L-methionine = N(7)-methylguanosine(46) in tRNA + S-adenosyl-L-homocysteine. It participates in tRNA modification; N(7)-methylguanine-tRNA biosynthesis. Catalyzes the formation of N(7)-methylguanine at position 46 (m7G46) in tRNA. The sequence is that of tRNA (guanine-N(7)-)-methyltransferase from Colwellia psychrerythraea (strain 34H / ATCC BAA-681) (Vibrio psychroerythus).